Reading from the N-terminus, the 70-residue chain is Turripeptide Gsg9.2 (70 aa).

The first 20 residues, 1–20 (MKVYCLLLVLLVGLVSQAHG), serve as a signal peptide directing secretion. The 50-residue stretch at 21-70 (QLDKKCQMVCTMDYRPVCGSDGRTYPNKCTLTSTACMSQRSITVFHDGEC) folds into the Kazal-like domain. 3 disulfide bridges follow: Cys-26-Cys-56, Cys-30-Cys-49, and Cys-38-Cys-70.

It belongs to the conopeptide P-like superfamily. In terms of tissue distribution, expressed by the venom duct.

Its subcellular location is the secreted. Functionally, acts as a neurotoxin by inhibiting an ion channel. May also act as a serine protease inhibitor, since it possess the kazal serine protease inhibitor signature. In Gemmula sogodensis (Gem-turris), this protein is Turripeptide Gsg9.2.